The primary structure comprises 1270 residues: DNA-directed RNA polymerase subunit beta (1270 aa).

It belongs to the RNA polymerase beta chain family. As to quaternary structure, the RNAP catalytic core consists of 2 alpha, 1 beta, 1 beta' and 1 omega subunit. When a sigma factor is associated with the core the holoenzyme is formed, which can initiate transcription.

It catalyses the reaction RNA(n) + a ribonucleoside 5'-triphosphate = RNA(n+1) + diphosphate. In terms of biological role, DNA-dependent RNA polymerase catalyzes the transcription of DNA into RNA using the four ribonucleoside triphosphates as substrates. The chain is DNA-directed RNA polymerase subunit beta from Bacteroides thetaiotaomicron (strain ATCC 29148 / DSM 2079 / JCM 5827 / CCUG 10774 / NCTC 10582 / VPI-5482 / E50).